The sequence spans 380 residues: 2-aminoethylphosphonate--pyruvate transaminase (380 aa).

N6-(pyridoxal phosphate)lysine is present on Lys204.

The protein belongs to the class-V pyridoxal-phosphate-dependent aminotransferase family. PhnW subfamily. Homodimer. Pyridoxal 5'-phosphate is required as a cofactor.

It carries out the reaction (2-aminoethyl)phosphonate + pyruvate = phosphonoacetaldehyde + L-alanine. Functionally, involved in phosphonate degradation. In Aeromonas hydrophila subsp. hydrophila (strain ATCC 7966 / DSM 30187 / BCRC 13018 / CCUG 14551 / JCM 1027 / KCTC 2358 / NCIMB 9240 / NCTC 8049), this protein is 2-aminoethylphosphonate--pyruvate transaminase.